Reading from the N-terminus, the 72-residue chain is Protein RALF-like 36 (72 aa).

Positions 1-27 are cleaved as a signal peptide; sequence MGISKKTVVQSFALIIIISIVMSTTEA. 2 cysteine pairs are disulfide-bonded: Cys-43/Cys-51 and Cys-63/Cys-69.

It belongs to the plant rapid alkalinization factor (RALF) family.

It is found in the secreted. Functionally, cell signaling peptide that may regulate plant stress, growth, and development. Mediates a rapid alkalinization of extracellular space by mediating a transient increase in the cytoplasmic Ca(2+) concentration leading to a calcium-dependent signaling events through a cell surface receptor and a concomitant activation of some intracellular mitogen-activated protein kinases. This is Protein RALF-like 36 from Arabidopsis thaliana (Mouse-ear cress).